Reading from the N-terminus, the 363-residue chain is S-methylmethionine--homocysteine S-methyltransferase BHMT2 (363 aa).

Residues 11-305 (RGILERLESG…YHIRAIAEEL (295 aa)) enclose the Hcy-binding domain. 3 residues coordinate Zn(2+): Cys-208, Cys-290, and Cys-291. At Ser-321 the chain carries Phosphoserine.

Homotetramer. Requires Zn(2+) as cofactor.

The enzyme catalyses S-methyl-L-methionine + L-homocysteine = 2 L-methionine + H(+). It functions in the pathway amino-acid biosynthesis; L-methionine biosynthesis via de novo pathway; L-methionine from L-homocysteine (BhmT route): step 1/1. In terms of biological role, involved in the regulation of homocysteine metabolism. Converts betaine and homocysteine to dimethylglycine and methionine, respectively. This reaction is also required for the irreversible oxidation of choline. This is S-methylmethionine--homocysteine S-methyltransferase BHMT2 (BHMT2) from Pongo abelii (Sumatran orangutan).